Reading from the N-terminus, the 110-residue chain is Histone H2A.1 (110 aa).

The protein belongs to the histone H2A family. As to quaternary structure, the nucleosome is a histone octamer containing two molecules each of H2A, H2B, H3 and H4 assembled in one H3-H4 heterotetramer and two H2A-H2B heterodimers. The octamer wraps approximately 147 bp of DNA. As to expression, expressed in the generative cell within the bicellular pollen. Not detected in other reproductive or vegetative tissues.

It localises to the nucleus. It is found in the chromosome. Core component of nucleosome. Nucleosomes wrap and compact DNA into chromatin, limiting DNA accessibility to the cellular machineries which require DNA as a template. Histones thereby play a central role in transcription regulation, DNA repair, DNA replication and chromosomal stability. DNA accessibility is regulated via a complex set of post-translational modifications of histones, also called histone code, and nucleosome remodeling. In Lilium longiflorum (Trumpet lily), this protein is Histone H2A.1 (gcH2A).